The primary structure comprises 182 residues: CDP-diacylglycerol--glycerol-3-phosphate 3-phosphatidyltransferase (182 aa).

At 2-12 (QFNIPTLLTLF) the chain is on the cytoplasmic side. Residues 13 to 37 (RVALIPFFVLAFYLPFVWAPLLCAL) traverse the membrane as a helical segment. Over 38–60 (IFVFAAVTDWFDGFLARRWKQTT) the chain is Periplasmic. Residues 61 to 81 (RFGAFLDPVADKVMVAVALVL) traverse the membrane as a helical segment. The Cytoplasmic portion of the chain corresponds to 82-86 (VAEYY). The helical transmembrane segment at 87-107 (HSWWITLPAATMIAREIIISA) threads the bilayer. The Periplasmic portion of the chain corresponds to 108-145 (LREWMAEIGKRSSVAVSWIGKVKTTAQMMALFALLWRP). The helical transmembrane segment at 146 to 168 (ERIVEGIGVAALYIAAVLTFWSM) threads the bilayer. Over 169 to 181 (FQYLNAARHDLLE) the chain is Cytoplasmic.

The protein belongs to the CDP-alcohol phosphatidyltransferase class-I family.

It localises to the cell inner membrane. The enzyme catalyses a CDP-1,2-diacyl-sn-glycerol + sn-glycerol 3-phosphate = a 1,2-diacyl-sn-glycero-3-phospho-(1'-sn-glycero-3'-phosphate) + CMP + H(+). It participates in phospholipid metabolism; phosphatidylglycerol biosynthesis; phosphatidylglycerol from CDP-diacylglycerol: step 1/2. In terms of biological role, catalyzes the conversion of cytidine diphosphate diacylglycerol (CDP-DG) and glycerol 3-phosphate into phosphatidylglycerol. Essential for the synthesis of anionic phospholipids, thereby playing a role in balancing the ratio of zwitterionic and anionic phospholipids, which is thought to be important for normal membrane function. This Pectobacterium atrosepticum (strain SCRI 1043 / ATCC BAA-672) (Erwinia carotovora subsp. atroseptica) protein is CDP-diacylglycerol--glycerol-3-phosphate 3-phosphatidyltransferase.